A 1408-amino-acid chain; its full sequence is DNA-directed RNA polymerase subunit beta (1408 aa).

Residues 1383-1408 (PERQRSFGGDFLGGGDGEERKTGTEA) are disordered. Residues 1399-1408 (GEERKTGTEA) are compositionally biased toward basic and acidic residues.

The protein belongs to the RNA polymerase beta chain family. The RNAP catalytic core consists of 2 alpha, 1 beta, 1 beta' and 1 omega subunit. When a sigma factor is associated with the core the holoenzyme is formed, which can initiate transcription.

It carries out the reaction RNA(n) + a ribonucleoside 5'-triphosphate = RNA(n+1) + diphosphate. DNA-dependent RNA polymerase catalyzes the transcription of DNA into RNA using the four ribonucleoside triphosphates as substrates. This Myxococcus xanthus (strain DK1622) protein is DNA-directed RNA polymerase subunit beta.